The primary structure comprises 352 residues: NADH-ubiquinone oxidoreductase chain 2 (352 aa).

A run of 11 helical transmembrane segments spans residues methionine 4–glutamate 24, tryptophan 26–phenylalanine 46, phenylalanine 60–phenylalanine 80, leucine 96–proline 116, phenylalanine 124–tyrosine 144, phenylalanine 150–leucine 170, isoleucine 178–leucine 198, leucine 205–phenylalanine 225, isoleucine 241–isoleucine 261, glycine 274–leucine 294, and leucine 330–isoleucine 350.

Belongs to the complex I subunit 2 family.

The protein resides in the mitochondrion inner membrane. The enzyme catalyses a ubiquinone + NADH + 5 H(+)(in) = a ubiquinol + NAD(+) + 4 H(+)(out). Its function is as follows. Core subunit of the mitochondrial membrane respiratory chain NADH dehydrogenase (Complex I) that is believed to belong to the minimal assembly required for catalysis. Complex I functions in the transfer of electrons from NADH to the respiratory chain. The immediate electron acceptor for the enzyme is believed to be ubiquinone. In Paracentrotus lividus (Common sea urchin), this protein is NADH-ubiquinone oxidoreductase chain 2 (ND2).